Here is a 220-residue protein sequence, read N- to C-terminus: PRA1 family protein B4 (220 aa).

Residues 1–27 (MASSAPPVLPISNPQTVPSAAPSSVES) are disordered. Residues 12-27 (SNPQTVPSAAPSSVES) show a composition bias toward polar residues. Helical transmembrane passes span 83 to 103 (YSYF…FSLV), 105 to 125 (HPFS…LYLF), 146 to 166 (GCLI…SVLV), 170 to 190 (MIGV…DLFL), and 196 to 216 (AATG…PAVI).

The protein belongs to the PRA1 family. As to quaternary structure, interacts with PRA1B1, PRA1B2, PRA1B3, PRA1B5, PRA1B6 and PRA1E. As to expression, expressed in roots, lateral roots, lateral root caps, stomata and trichomes.

It localises to the endosome membrane. Its function is as follows. May be involved in both secretory and endocytic intracellular trafficking in the endosomal/prevacuolar compartments. This is PRA1 family protein B4 (PRA1B4) from Arabidopsis thaliana (Mouse-ear cress).